We begin with the raw amino-acid sequence, 414 residues long: Glucose-1-phosphate adenylyltransferase (414 aa).

Residues Gly-164, 181 to 182 (EK), and Ser-199 each bind alpha-D-glucose 1-phosphate.

Belongs to the bacterial/plant glucose-1-phosphate adenylyltransferase family. Homotetramer.

It carries out the reaction alpha-D-glucose 1-phosphate + ATP + H(+) = ADP-alpha-D-glucose + diphosphate. It functions in the pathway glycan biosynthesis; glycogen biosynthesis. Involved in the biosynthesis of ADP-glucose, a building block required for the elongation reactions to produce glycogen. Catalyzes the reaction between ATP and alpha-D-glucose 1-phosphate (G1P) to produce pyrophosphate and ADP-Glc. In Kocuria rhizophila (strain ATCC 9341 / DSM 348 / NBRC 103217 / DC2201), this protein is Glucose-1-phosphate adenylyltransferase.